Reading from the N-terminus, the 637-residue chain is DNA mismatch repair protein MutL (637 aa).

Polar residues predominate over residues glutamine 343–proline 352. Positions glutamine 343–proline 411 are disordered. Over residues serine 365–histidine 380 the composition is skewed to basic and acidic residues. Residues tyrosine 388 to serine 397 show a composition bias toward low complexity.

It belongs to the DNA mismatch repair MutL/HexB family.

In terms of biological role, this protein is involved in the repair of mismatches in DNA. It is required for dam-dependent methyl-directed DNA mismatch repair. May act as a 'molecular matchmaker', a protein that promotes the formation of a stable complex between two or more DNA-binding proteins in an ATP-dependent manner without itself being part of a final effector complex. The polypeptide is DNA mismatch repair protein MutL (Shewanella halifaxensis (strain HAW-EB4)).